The following is a 351-amino-acid chain: MFYLLGLRLLKYITFRMAYATIFAFLLSLIIGPHIILRLKKLRVDQVLREDGPKRHLSEKAGIPTMGGILIFFCVFISLVFWSNILNVYFLIMLFVMLGFAFLGFIDDFLKIKKKTSDGLKARFKIYGQIIFSFISVGTLYYFGSEHVSMIYFPFIKSFRIDLGLFYIPFGMFILISASNSFNLTDGLDGLAIGLSIVITGALIIIAYLTSRADFAAYLHIPNIKGSEELVIFLGALLGGSFGFLWFNAYPAKIMMGDTGSLALGAILGMAALIVKSEILFSILAGVFIIETMSVIIQVMVYKKTKKRVFKMAPLHHHFEELGWSEMQVVIRFWIIGLIFAIIALSTIKIR.

Helical transmembrane passes span 17–37, 62–82, 85–105, 124–144, 161–181, 190–210, 230–250, 254–274, 279–299, and 328–348; these read MAYA…HIIL, GIPT…LVFW, ILNV…FLGF, FKIY…YYFG, IDLG…ASNS, GLAI…AYLT, LVIF…FNAY, IMMG…AALI, ILFS…IIQV, and QVVI…LSTI.

It belongs to the glycosyltransferase 4 family. MraY subfamily. Requires Mg(2+) as cofactor.

The protein resides in the cell inner membrane. It catalyses the reaction UDP-N-acetyl-alpha-D-muramoyl-L-alanyl-gamma-D-glutamyl-meso-2,6-diaminopimeloyl-D-alanyl-D-alanine + di-trans,octa-cis-undecaprenyl phosphate = di-trans,octa-cis-undecaprenyl diphospho-N-acetyl-alpha-D-muramoyl-L-alanyl-D-glutamyl-meso-2,6-diaminopimeloyl-D-alanyl-D-alanine + UMP. The protein operates within cell wall biogenesis; peptidoglycan biosynthesis. Catalyzes the initial step of the lipid cycle reactions in the biosynthesis of the cell wall peptidoglycan: transfers peptidoglycan precursor phospho-MurNAc-pentapeptide from UDP-MurNAc-pentapeptide onto the lipid carrier undecaprenyl phosphate, yielding undecaprenyl-pyrophosphoryl-MurNAc-pentapeptide, known as lipid I. The sequence is that of Phospho-N-acetylmuramoyl-pentapeptide-transferase from Borrelia garinii subsp. bavariensis (strain ATCC BAA-2496 / DSM 23469 / PBi) (Borreliella bavariensis).